A 321-amino-acid chain; its full sequence is Glyoxylate/hydroxypyruvate reductase B (321 aa).

Active-site residues include Arg237 and Glu266. His285 serves as the catalytic Proton donor.

It belongs to the D-isomer specific 2-hydroxyacid dehydrogenase family. GhrB subfamily. Homodimer.

It localises to the cytoplasm. The catalysed reaction is glycolate + NADP(+) = glyoxylate + NADPH + H(+). It carries out the reaction (R)-glycerate + NAD(+) = 3-hydroxypyruvate + NADH + H(+). The enzyme catalyses (R)-glycerate + NADP(+) = 3-hydroxypyruvate + NADPH + H(+). In terms of biological role, catalyzes the NADPH-dependent reduction of glyoxylate and hydroxypyruvate into glycolate and glycerate, respectively. In Erwinia tasmaniensis (strain DSM 17950 / CFBP 7177 / CIP 109463 / NCPPB 4357 / Et1/99), this protein is Glyoxylate/hydroxypyruvate reductase B.